The primary structure comprises 131 residues: Histone H2B.2 (131 aa).

Residues 1–20 (MAPPKAEKKPASKAPAEKKP) show a composition bias toward basic and acidic residues. Positions 1–39 (MAPPKAEKKPASKAPAEKKPAAKKTASSTDAKKRTKTRK) are disordered. Residues K8 and K9 each carry the N6-acetyllysine; alternate modification. Residues K8 and K9 each participate in a glycyl lysine isopeptide (Lys-Gly) (interchain with G-Cter in SUMO); alternate cross-link. S12 carries the post-translational modification Phosphoserine. The residue at position 13 (K13) is an N6-acetyllysine. K18 is modified (N6-acetyllysine; alternate). K18 participates in a covalent cross-link: Glycyl lysine isopeptide (Lys-Gly) (interchain with G-Cter in SUMO); alternate. K19 is covalently cross-linked (Glycyl lysine isopeptide (Lys-Gly) (interchain with G-Cter in SUMO)). Residue K125 forms a Glycyl lysine isopeptide (Lys-Gly) (interchain with G-Cter in ubiquitin) linkage.

The protein belongs to the histone H2B family. As to quaternary structure, the nucleosome is a histone octamer containing two molecules each of H2A, H2B, H3 and H4 assembled in one H3-H4 heterotetramer and two H2A-H2B heterodimers. The octamer wraps approximately 147 bp of DNA. Monoubiquitinated to form H2BK123ub1. H2BK123ub1 gives a specific tag for epigenetic transcriptional activation and is also prerequisite for H3K4me and H3K79me formation. H2BK123ub1 also modulates the formation of double-strand breaks during meiosis and is a prerequisite for DNA-damage checkpoint activation. Post-translationally, phosphorylated by STE20 to form H2BS10ph during progression through meiotic prophase. May be correlated with chromosome condensation. In terms of processing, acetylated by GCN5 to form H2BK11ac and H2BK16ac. H2BK16ac can also be formed by ESA1. Acetylation of N-terminal lysines and particularly formation of H2BK11acK16ac has a positive effect on transcription. Sumoylation to form H2BK6su or H2BK7su, and probably also H2BK16su or H2BK17su, occurs preferentially near the telomeres and represses gene transcription.

Its subcellular location is the nucleus. The protein localises to the chromosome. In terms of biological role, core component of nucleosome. Nucleosomes wrap and compact DNA into chromatin, limiting DNA accessibility to the cellular machineries which require DNA as a template. Histones thereby play a central role in transcription regulation, DNA repair, DNA replication and chromosomal stability. DNA accessibility is regulated via a complex set of post-translational modifications of histones, also called histone code, and nucleosome remodeling. The chain is Histone H2B.2 (HTB2) from Scheffersomyces stipitis (strain ATCC 58785 / CBS 6054 / NBRC 10063 / NRRL Y-11545) (Yeast).